The sequence spans 31 residues: Toxin BmKK16 (31 aa).

Q1 carries the pyrrolidone carboxylic acid modification. Cystine bridges form between C4–C20, C10–C25, and C14–C27. The residue at position 31 (P31) is a Proline amide.

This sequence belongs to the short scorpion toxin superfamily. Potassium channel inhibitor family. Alpha-KTx 17 subfamily. In terms of processing, the N-terminus is blocked. As to expression, expressed by the venom gland.

It is found in the secreted. In terms of biological role, blocker of potassium channels (Kv). The protein is Toxin BmKK16 of Olivierus martensii (Manchurian scorpion).